The following is a 150-amino-acid chain: Ribosome maturation factor RimP (150 aa).

It belongs to the RimP family.

Its subcellular location is the cytoplasm. Functionally, required for maturation of 30S ribosomal subunits. The polypeptide is Ribosome maturation factor RimP (Hahella chejuensis (strain KCTC 2396)).